Reading from the N-terminus, the 548-residue chain is Membrane-associated tyrosine- and threonine-specific cdc2-inhibitory kinase (548 aa).

The tract at residues 61 to 89 is disordered; the sequence is PNKQRSWSQPRPQSVSFRSPQNKTPASKL. Positions 63-85 are enriched in polar residues; the sequence is KQRSWSQPRPQSVSFRSPQNKTP. The Protein kinase domain occupies 103–353; sequence FKSICKLGRG…VDWLLSLPAI (251 aa). ATP contacts are provided by residues 109–117 and K132; that span reads LGRGSFGEV. Catalysis depends on D226, which acts as the Proton acceptor. Residues N231, D244, and G246 each coordinate Mg(2+). The Membrane-association motif motif lies at 376 to 392; sequence VYQFIVWLLSFVFQWLN. A disordered region spans residues 464-523; the sequence is SPDLLSRPSLGSTSTPRNLSPEFSMRKRSALPLTPNVSRISQDSTGKSRSPSTSHSSSGF. Polar residues predominate over residues 472–481; sequence SLGSTSTPRN. The residue at position 478 (T478) is a Phosphothreonine; by CDK1. A compositionally biased stretch (low complexity) spans 507–521; sequence STGKSRSPSTSHSSS.

It belongs to the protein kinase superfamily. Ser/Thr protein kinase family. WEE1 subfamily. As to quaternary structure, interacts with CDC2-CCNB1 complex. Interacts with Mos during oocyte maturation. Post-translationally, autophosphorylated. Phosphorylated on undefined residues by RSK2 and Mos kinases. Phosphorylation at Thr-478 by cdk1 creates a docking site for plk1/plx1, leading to subsequent phosphorylation by plk1/plk1 and inhibition of the protein kinase activity kinase activity.

Its subcellular location is the endoplasmic reticulum membrane. It localises to the golgi apparatus membrane. The enzyme catalyses L-seryl-[protein] + ATP = O-phospho-L-seryl-[protein] + ADP + H(+). It catalyses the reaction L-threonyl-[protein] + ATP = O-phospho-L-threonyl-[protein] + ADP + H(+). With respect to regulation, negatively regulated by hyperphosphorylation during mitosis. The plk1/plk1 protein kinase may be required for mitotic phosphorylation. Inactivated during oocyte maturation by phosphorylation by RSK2 and Mos kinase. Its function is as follows. Acts as a negative regulator of entry into mitosis (G2 to M transition) by phosphorylation of the CDK1 kinase specifically when CDK1 is complexed to cyclins. Mediates phosphorylation of CDK1 predominantly on 'Thr-14'. Also involved in Golgi fragmentation. May be involved in phosphorylation of CDK1 on 'Tyr-15' to a lesser degree, however tyrosine kinase activity is unclear and may be indirect. This chain is Membrane-associated tyrosine- and threonine-specific cdc2-inhibitory kinase (pkmyt1), found in Xenopus laevis (African clawed frog).